We begin with the raw amino-acid sequence, 398 residues long: Phosphoglycerate kinase (398 aa).

Substrate-binding positions include 23–25 (DFN), arginine 38, 61–64 (HMGK), arginine 122, and arginine 155. ATP is bound by residues lysine 206, glycine 297, glutamate 328, and 354-357 (GGDS).

Belongs to the phosphoglycerate kinase family. In terms of assembly, monomer.

The protein resides in the cytoplasm. The enzyme catalyses (2R)-3-phosphoglycerate + ATP = (2R)-3-phospho-glyceroyl phosphate + ADP. Its pathway is carbohydrate degradation; glycolysis; pyruvate from D-glyceraldehyde 3-phosphate: step 2/5. The chain is Phosphoglycerate kinase from Clostridium botulinum (strain 657 / Type Ba4).